Here is a 304-residue protein sequence, read N- to C-terminus: UDP-N-acetylenolpyruvoylglucosamine reductase (304 aa).

Positions 33–212 constitute an FAD-binding PCMH-type domain; that stretch reads MGGLADLFLI…KEMMDDLTHK (180 aa). Arg176 is a catalytic residue. The active-site Proton donor is Ser226. Glu296 is an active-site residue.

It belongs to the MurB family. FAD serves as cofactor.

It is found in the cytoplasm. The enzyme catalyses UDP-N-acetyl-alpha-D-muramate + NADP(+) = UDP-N-acetyl-3-O-(1-carboxyvinyl)-alpha-D-glucosamine + NADPH + H(+). It functions in the pathway cell wall biogenesis; peptidoglycan biosynthesis. Cell wall formation. The polypeptide is UDP-N-acetylenolpyruvoylglucosamine reductase (Exiguobacterium sibiricum (strain DSM 17290 / CCUG 55495 / CIP 109462 / JCM 13490 / 255-15)).